The primary structure comprises 249 residues: MVDFRKFYKENANVAYTVLGYPNLQTSEAFLQRLDQSPIDILELGVAYSDPIADGEIIADAAKIALDQGMDIHSVFELLARIKTKKALVFMVYYNLIFSYGLEKFVKKAKSLGICALIVPELSFEESDDLIKECERYNIALITLVSVTTPKERVKKLVKHAKGFIYLLASIGITGTKSVEEAILQDKVKEIRSFTNLPIFVGFGIQNNQDVKRMRKVADGVIVGTSIVKCFKQGNLDIIMKDIEEIFKK.

Active-site proton acceptor residues include Glu43 and Asp54.

This sequence belongs to the TrpA family. Tetramer of two alpha and two beta chains.

It carries out the reaction (1S,2R)-1-C-(indol-3-yl)glycerol 3-phosphate + L-serine = D-glyceraldehyde 3-phosphate + L-tryptophan + H2O. It participates in amino-acid biosynthesis; L-tryptophan biosynthesis; L-tryptophan from chorismate: step 5/5. The alpha subunit is responsible for the aldol cleavage of indoleglycerol phosphate to indole and glyceraldehyde 3-phosphate. This is Tryptophan synthase alpha chain from Campylobacter jejuni subsp. jejuni serotype O:23/36 (strain 81-176).